A 287-amino-acid chain; its full sequence is uncharacterized protein (287 aa).

Catalysis depends on charge relay system residues T43 and Y104. Y130 acts as the Proton donor in catalysis. The Schiff-base intermediate with substrate role is filled by K158.

It belongs to the DapA family. Homotetramer.

It localises to the cytoplasm. This is an uncharacterized protein from Pyrococcus horikoshii (strain ATCC 700860 / DSM 12428 / JCM 9974 / NBRC 100139 / OT-3).